The primary structure comprises 164 residues: Large ribosomal subunit protein eL24 (164 aa).

2 disordered regions span residues Lys63–Ser82 and Glu117–Ala164. Over residues Lys71–Tyr81 the composition is skewed to basic residues. The span at Glu117–Val133 shows a compositional bias: basic and acidic residues.

The protein belongs to the eukaryotic ribosomal protein eL24 family.

It localises to the cytoplasm. The protein is Large ribosomal subunit protein eL24 (RPL24) of Cicer arietinum (Chickpea).